The sequence spans 587 residues: Membrane protein insertase YidC (587 aa).

The next 5 helical transmembrane spans lie at 5-25 (SVIG…FMKP), 365-385 (GLII…LSLA), 430-450 (LGGC…FYVF), 480-500 (LPLY…TVFF), and 516-536 (IMIW…PSGL).

It belongs to the OXA1/ALB3/YidC family. Type 1 subfamily. In terms of assembly, interacts with the Sec translocase complex via SecD. Specifically interacts with transmembrane segments of nascent integral membrane proteins during membrane integration.

It is found in the cell inner membrane. Required for the insertion and/or proper folding and/or complex formation of integral membrane proteins into the membrane. Involved in integration of membrane proteins that insert both dependently and independently of the Sec translocase complex, as well as at least some lipoproteins. Aids folding of multispanning membrane proteins. This chain is Membrane protein insertase YidC, found in Chlorobaculum parvum (strain DSM 263 / NCIMB 8327) (Chlorobium vibrioforme subsp. thiosulfatophilum).